A 637-amino-acid chain; its full sequence is 3D-(3,5/4)-trihydroxycyclohexane-1,2-dione hydrolase (637 aa).

Glu-65 contacts thiamine diphosphate. The tract at residues 441–521 (SLPGDLQRLW…INVLLFDNSG (81 aa)) is thiamine pyrophosphate binding. Residues Asp-492 and Asn-519 each contribute to the Mg(2+) site.

This sequence belongs to the TPP enzyme family. Requires Mg(2+) as cofactor. It depends on thiamine diphosphate as a cofactor.

It carries out the reaction 3D-3,5/4-trihydroxycyclohexane-1,2-dione + H2O = 5-deoxy-D-glucuronate + H(+). Its pathway is polyol metabolism; myo-inositol degradation into acetyl-CoA; acetyl-CoA from myo-inositol: step 3/7. In terms of biological role, involved in the cleavage of the C1-C2 bond of 3D-(3,5/4)-trihydroxycyclohexane-1,2-dione (THcHDO) to yield 5-deoxy-glucuronate (5DG). In Halalkalibacterium halodurans (strain ATCC BAA-125 / DSM 18197 / FERM 7344 / JCM 9153 / C-125) (Bacillus halodurans), this protein is 3D-(3,5/4)-trihydroxycyclohexane-1,2-dione hydrolase.